The chain runs to 115 residues: MARVKNGIVHVARRKRILKKTKGFWGTKKSNYKKAKDTLRKGMMYATRDRKTRKRDLRSLWIVRISAALTGMGINYSRFFEGLRKLNIKLNRKILSNLAIEDIESFKKIVYEIKN.

The protein belongs to the bacterial ribosomal protein bL20 family.

Its function is as follows. Binds directly to 23S ribosomal RNA and is necessary for the in vitro assembly process of the 50S ribosomal subunit. It is not involved in the protein synthesizing functions of that subunit. This Borrelia duttonii (strain Ly) protein is Large ribosomal subunit protein bL20.